A 180-amino-acid polypeptide reads, in one-letter code: MEYKSCSDKYIWSADDSYFYKGLSELIVDIDELIYLSLEKIRKDFVFINLNTASLNEFIRRDSEWLSAVKGKQVVLIAARKSEALANYWYYNSDIRGVVYVGLSRDIRKELAYVINGRFLRKDIKKDKITDREMKIIRMTAQGMQPKSIARIENCSVKTVYTHRRNAEAKLYSKIYKLVQ.

Residues 122–180 (KDIKKDKITDREMKIIRMTAQGMQPKSIARIENCSVKTVYTHRRNAEAKLYSKIYKLVQ) enclose the HTH luxR-type domain. The H-T-H motif DNA-binding region spans 146–165 (PKSIARIENCSVKTVYTHRR).

Belongs to the EcpR/MatA family.

It is found in the cytoplasm. Functionally, part of the ecpRABCDE operon, which encodes the E.coli common pilus (ECP). ECP plays a dual role in early-stage biofilm development and host cell recognition. Positively regulates the expression of the ecp operon. The sequence is that of HTH-type transcriptional regulator EcpR (ecpR) from Klebsiella pneumoniae subsp. pneumoniae (strain ATCC 700721 / MGH 78578).